The chain runs to 155 residues: Transcriptional repressor NrdR (155 aa).

A zinc finger spans residues 3–34 (CPFCGNIDTQVKDSRPAEDHVSIRRRRFCPAC). Residues 49–139 (LVVIKSTGKR…VYKNFQAADD (91 aa)) enclose the ATP-cone domain.

Belongs to the NrdR family. Zn(2+) serves as cofactor.

In terms of biological role, negatively regulates transcription of bacterial ribonucleotide reductase nrd genes and operons by binding to NrdR-boxes. The protein is Transcriptional repressor NrdR of Roseobacter denitrificans (strain ATCC 33942 / OCh 114) (Erythrobacter sp. (strain OCh 114)).